The sequence spans 208 residues: Transcription factor atf-4 homolog (208 aa).

Disordered regions lie at residues His-18–Pro-47 and Glu-106–Glu-165. Residues Asn-110 to Ser-120 show a composition bias toward low complexity. The segment covering Ser-121–Lys-141 has biased composition (basic and acidic residues). The 64-residue stretch at Pro-138 to Met-201 folds into the bZIP domain. The interval Lys-140–Lys-163 is basic motif. The interval Leu-173–Leu-187 is leucine-zipper.

The protein belongs to the bZIP family.

It is found in the nucleus. In terms of biological role, transcription factor. Involved in positively modulating longevity and stress tolerance, probably acting by positively regulating expression of transsulfuration enzyme cth-2, leading to increased hydrogen sulfide production and therefore increased protein persulfidation, a protective modification of redox-reactive cysteines. May mediate longevity and increased stress resistance induced by mTORC1 suppression. This chain is Transcription factor atf-4 homolog, found in Caenorhabditis elegans.